A 491-amino-acid polypeptide reads, in one-letter code: Homeobox protein unplugged (491 aa).

Disordered regions lie at residues 1–23 (MERP…TKTT), 46–69 (SASA…QEQE), 124–146 (AGKE…PLPH), and 227–329 (FSPA…RRTA). Positions 254–264 (GDSSSDISLTL) are enriched in polar residues. Positions 305-316 (GLGGKDSQGNGS) are enriched in gly residues. Residues 323–382 (SRRRRTAFTSEQLLELEREFHAKKYLSLTERSQIATSLKLSEVQVKIWFQNRRAKWKRVK) constitute a DNA-binding region (homeobox).

Its subcellular location is the nucleus. Plays a regulatory role in neural branching of the tracheae: segment-specific aspects of these neural branching patterns appear to be generated by homeotic regulation of expression. In Drosophila pseudoobscura pseudoobscura (Fruit fly), this protein is Homeobox protein unplugged.